The chain runs to 583 residues: Protein disulfide-isomerase-like protein of the testis (583 aa).

A signal peptide spans 1–17 (MDLLWMPLLLVAARISA). Asn58, Asn128, Asn160, and Asn340 each carry an N-linked (GlcNAc...) asparagine glycan. The region spanning 388–451 (LVKQLVGKNF…IAKIDITAND (64 aa)) is the Thioredoxin domain. Basic and acidic residues-rich tracts occupy residues 522–531 (EVPMMKKELP) and 540–559 (NVTK…KTSE). A disordered region spans residues 522–583 (EVPMMKKELP…KKKPKVKEEL (62 aa)). Asn540 is a glycosylation site (N-linked (GlcNAc...) asparagine). A compositionally biased stretch (basic residues) spans 573 to 583 (QKKKPKVKEEL). Residues 580–583 (KEEL) carry the Prevents secretion from ER motif.

This sequence belongs to the protein disulfide isomerase family. Homodimer. The homodimer is not disulfide-linked. Interacts with ERO1A and CLGN. Post-translationally, N-glycosylated.

The protein localises to the endoplasmic reticulum. Functionally, probable redox-inactive chaperone involved in spermatogenesis. In Macaca fascicularis (Crab-eating macaque), this protein is Protein disulfide-isomerase-like protein of the testis (PDILT).